Reading from the N-terminus, the 317-residue chain is Pseudouridine-5'-phosphate glycosidase 1 (317 aa).

Glutamate 40 serves as the catalytic Proton donor. Substrate is bound by residues lysine 101 and valine 121. Position 153 (aspartate 153) interacts with Mn(2+). Substrate is bound at residue 155–157; it reads SAD. The active-site Nucleophile is the lysine 174.

The protein belongs to the pseudouridine-5'-phosphate glycosidase family. As to quaternary structure, homotrimer. Requires Mn(2+) as cofactor.

It carries out the reaction D-ribose 5-phosphate + uracil = psi-UMP + H2O. Its function is as follows. Catalyzes the reversible cleavage of pseudouridine 5'-phosphate (PsiMP) to ribose 5-phosphate and uracil. Functions biologically in the cleavage direction, as part of a pseudouridine degradation pathway. This is Pseudouridine-5'-phosphate glycosidase 1 from Rhizobium johnstonii (strain DSM 114642 / LMG 32736 / 3841) (Rhizobium leguminosarum bv. viciae).